The primary structure comprises 1409 residues: Protein three rows (1409 aa).

The tract at residues 1052 to 1058 is separase cleavage-site; that stretch reads VEPIRKQ. Disordered regions lie at residues 1260-1284 and 1297-1409; these read PIGC…SDHV and DDAA…RQRN. 2 stretches are compositionally biased toward low complexity: residues 1264 to 1273 and 1300 to 1310; these read SNSSSSSSKS and ASVSASTPAPS.

In terms of assembly, interacts with pim and Sse. Cleavage of thr contributes to inactivation of Sse.

Its subcellular location is the cytoplasm. Its function is as follows. Required specifically for chromosome disjunction during all mitoses; maternally provided protein is sufficient until mitosis 14 then zygotic protein is required. Involved in formation and/or maintenance of epithelial structures: bud extension during Malpighian tubule development, and foregut and hindgut morphogenesis. The polypeptide is Protein three rows (thr) (Drosophila pseudoobscura pseudoobscura (Fruit fly)).